The chain runs to 619 residues: Schlafen family member 12-like (619 aa).

The helical transmembrane segment at 598 to 618 threads the bilayer; sequence IFLFVCLFRFCLFVCLFVFFL.

It belongs to the Schlafen family.

The protein resides in the membrane. The polypeptide is Schlafen family member 12-like (SLFN12L) (Pongo abelii (Sumatran orangutan)).